A 363-amino-acid chain; its full sequence is 3-isopropylmalate dehydrogenase (363 aa).

79-92 (GPKWEHLPPNDQPE) serves as a coordination point for NAD(+). The substrate site is built by arginine 100, arginine 110, arginine 139, and aspartate 228. Mg(2+) is bound by residues aspartate 228, aspartate 252, and aspartate 256. 286–298 (GSAPDIAGKNIAN) contributes to the NAD(+) binding site.

Belongs to the isocitrate and isopropylmalate dehydrogenases family. LeuB type 1 subfamily. In terms of assembly, homodimer. It depends on Mg(2+) as a cofactor. Requires Mn(2+) as cofactor.

Its subcellular location is the cytoplasm. The enzyme catalyses (2R,3S)-3-isopropylmalate + NAD(+) = 4-methyl-2-oxopentanoate + CO2 + NADH. It functions in the pathway amino-acid biosynthesis; L-leucine biosynthesis; L-leucine from 3-methyl-2-oxobutanoate: step 3/4. Functionally, catalyzes the oxidation of 3-carboxy-2-hydroxy-4-methylpentanoate (3-isopropylmalate) to 3-carboxy-4-methyl-2-oxopentanoate. The product decarboxylates to 4-methyl-2 oxopentanoate. The chain is 3-isopropylmalate dehydrogenase from Vibrio parahaemolyticus serotype O3:K6 (strain RIMD 2210633).